The following is a 192-amino-acid chain: Pyridoxal 5'-phosphate synthase subunit PdxT (192 aa).

53–55 contributes to the L-glutamine binding site; sequence GES. The Nucleophile role is filled by C82. L-glutamine is bound by residues R109 and 137-138; that span reads IR. Active-site charge relay system residues include H173 and E175.

This sequence belongs to the glutaminase PdxT/SNO family. As to quaternary structure, in the presence of PdxS, forms a dodecamer of heterodimers. Only shows activity in the heterodimer.

It catalyses the reaction aldehydo-D-ribose 5-phosphate + D-glyceraldehyde 3-phosphate + L-glutamine = pyridoxal 5'-phosphate + L-glutamate + phosphate + 3 H2O + H(+). The catalysed reaction is L-glutamine + H2O = L-glutamate + NH4(+). The protein operates within cofactor biosynthesis; pyridoxal 5'-phosphate biosynthesis. Functionally, catalyzes the hydrolysis of glutamine to glutamate and ammonia as part of the biosynthesis of pyridoxal 5'-phosphate. The resulting ammonia molecule is channeled to the active site of PdxS. The polypeptide is Pyridoxal 5'-phosphate synthase subunit PdxT (Methanoculleus marisnigri (strain ATCC 35101 / DSM 1498 / JR1)).